We begin with the raw amino-acid sequence, 323 residues long: D-alanine--D-alanine ligase (323 aa).

The ATP-grasp domain maps to lysine 105–glutamate 305. Proline 131–threonine 188 contacts ATP. Residues aspartate 256, glutamate 272, and asparagine 274 each coordinate Mg(2+).

The protein belongs to the D-alanine--D-alanine ligase family. The cofactor is Mg(2+). It depends on Mn(2+) as a cofactor.

Its subcellular location is the cytoplasm. The catalysed reaction is 2 D-alanine + ATP = D-alanyl-D-alanine + ADP + phosphate + H(+). It functions in the pathway cell wall biogenesis; peptidoglycan biosynthesis. Its function is as follows. Cell wall formation. This Erythrobacter litoralis (strain HTCC2594) protein is D-alanine--D-alanine ligase.